The primary structure comprises 122 residues: Large ribosomal subunit protein bL12 (122 aa).

Belongs to the bacterial ribosomal protein bL12 family. Homodimer. Part of the ribosomal stalk of the 50S ribosomal subunit. Forms a multimeric L10(L12)X complex, where L10 forms an elongated spine to which 2 to 4 L12 dimers bind in a sequential fashion. Binds GTP-bound translation factors.

Its function is as follows. Forms part of the ribosomal stalk which helps the ribosome interact with GTP-bound translation factors. Is thus essential for accurate translation. The chain is Large ribosomal subunit protein bL12 from Cronobacter sakazakii (strain ATCC BAA-894) (Enterobacter sakazakii).